Here is a 57-residue protein sequence, read N- to C-terminus: Large ribosomal subunit protein bL32 (57 aa).

The disordered stretch occupies residues 1–20 (MAVQQRRVSKSRKGMRRSHD). Residues 7-19 (RVSKSRKGMRRSH) show a composition bias toward basic residues.

The protein belongs to the bacterial ribosomal protein bL32 family.

This Ureaplasma urealyticum serovar 10 (strain ATCC 33699 / Western) protein is Large ribosomal subunit protein bL32.